The following is a 310-amino-acid chain: tRNA-cytidine(32) 2-sulfurtransferase (310 aa).

The short motif at 48 to 53 (SGGKDS) is the PP-loop motif element. [4Fe-4S] cluster is bound by residues C123, C126, and C214.

This sequence belongs to the TtcA family. In terms of assembly, homodimer. The cofactor is Mg(2+). [4Fe-4S] cluster serves as cofactor.

The protein localises to the cytoplasm. It carries out the reaction cytidine(32) in tRNA + S-sulfanyl-L-cysteinyl-[cysteine desulfurase] + AH2 + ATP = 2-thiocytidine(32) in tRNA + L-cysteinyl-[cysteine desulfurase] + A + AMP + diphosphate + H(+). The protein operates within tRNA modification. Catalyzes the ATP-dependent 2-thiolation of cytidine in position 32 of tRNA, to form 2-thiocytidine (s(2)C32). The sulfur atoms are provided by the cysteine/cysteine desulfurase (IscS) system. This chain is tRNA-cytidine(32) 2-sulfurtransferase, found in Vibrio vulnificus (strain CMCP6).